Here is an 843-residue protein sequence, read N- to C-terminus: DNA helicase MCM8 (843 aa).

The span at 1-23 (MSQGWRGGWSGGRGGNPYAGGWR) shows a compositional bias: gly residues. The tract at residues 1–52 (MSQGWRGGWSGGRGGNPYAGGWRGRPWRGRGQGGSWSRNSGRDPVCFSTAPP) is disordered. Residues 394–601 (LFQLIVNSLC…DHDHLLSEHV (208 aa)) enclose the MCM domain. Position 446–453 (446–453 (GDPGLGKS)) interacts with ATP.

It belongs to the MCM family. In terms of assembly, component of the MCM8-MCM9 complex, which forms a hexamer composed of mcm8 and mcm9.

The protein localises to the nucleus. It catalyses the reaction ATP + H2O = ADP + phosphate + H(+). Functionally, component of the MCM8-MCM9 complex, a complex involved in homologous recombination repair following DNA interstrand cross-links and plays a key role during gametogenesis. The MCM8-MCM9 complex probably acts as a hexameric helicase required to process aberrant forks into homologous recombination substrates and to orchestrate homologous recombination with resection, fork stabilization and fork restart. In eggs, required for elongation during DNA replication by facilitating the recruitment of rpa2/rpa34 and stimulating the processivity of DNA polymerases at replication foci. Probably not required for DNA replication in other cells. This is DNA helicase MCM8 (mcm8) from Xenopus tropicalis (Western clawed frog).